We begin with the raw amino-acid sequence, 290 residues long: Shikimate dehydrogenase (NADP(+)) (290 aa).

Residues 20-22 (SLS) and T67 each bind shikimate. K71 serves as the catalytic Proton acceptor. The shikimate site is built by N92 and D107. NADP(+) is bound by residues 132–136 (GAGGA) and M228. Residue Y230 coordinates shikimate. G251 lines the NADP(+) pocket.

It belongs to the shikimate dehydrogenase family. In terms of assembly, homodimer.

It catalyses the reaction shikimate + NADP(+) = 3-dehydroshikimate + NADPH + H(+). Its pathway is metabolic intermediate biosynthesis; chorismate biosynthesis; chorismate from D-erythrose 4-phosphate and phosphoenolpyruvate: step 4/7. Functionally, involved in the biosynthesis of the chorismate, which leads to the biosynthesis of aromatic amino acids. Catalyzes the reversible NADPH linked reduction of 3-dehydroshikimate (DHSA) to yield shikimate (SA). The polypeptide is Shikimate dehydrogenase (NADP(+)) (Geobacter sp. (strain M21)).